Consider the following 904-residue polypeptide: DNA polymerase I (904 aa).

A 5'-3' exonuclease domain is found at 186–279; that stretch reads TPRQYPDFAA…DTLRLQPWDR (94 aa). The 3'-5' exonuclease domain maps to 317 to 493; that stretch reads RGGALAPGTV…LADALDAELA (177 aa).

Belongs to the DNA polymerase type-A family. As to quaternary structure, single-chain monomer with multiple functions.

The catalysed reaction is DNA(n) + a 2'-deoxyribonucleoside 5'-triphosphate = DNA(n+1) + diphosphate. In terms of biological role, in addition to polymerase activity, this DNA polymerase exhibits 3'-5' and 5'-3' exonuclease activity. This Mycobacterium bovis (strain ATCC BAA-935 / AF2122/97) protein is DNA polymerase I (polA).